Consider the following 397-residue polypeptide: Serpin B10 (397 aa).

The short motif at 74 to 77 (KKRK) is the Nuclear localization signal element.

This sequence belongs to the serpin family. Ov-serpin subfamily.

Its subcellular location is the nucleus. The protein resides in the cytoplasm. Its function is as follows. Protease inhibitor that may play a role in the regulation of protease activities during hematopoiesis and apoptosis induced by TNF. May regulate protease activities in the cytoplasm and in the nucleus. The sequence is that of Serpin B10 (SERPINB10) from Otolemur garnettii (Small-eared galago).